Here is a 525-residue protein sequence, read N- to C-terminus: Potassium voltage-gated channel subfamily A member 3 (525 aa).

Residues 1–23 (MTVVPGDHLLEPEAAGGGGGDPP) form a disordered region. Residues 1 to 184 (MTVVPGDHLL…EYPESSGPAR (184 aa)) lie on the Cytoplasmic side of the membrane. The helical transmembrane segment at 185 to 203 (GIAIVSVLVILISIVIFCL) threads the bilayer. Over 204–244 (ETLPEFRDEKDYPASPSQDVFEAANNSTSGASSGASSFSDP) the chain is Extracellular. N-linked (GlcNAc...) asparagine glycosylation occurs at Asn229. The chain crosses the membrane as a helical span at residues 245–266 (FFVVETLCIIWFSFELLVRFFA). Residue Cys267 is the site of S-palmitoyl cysteine attachment. The Cytoplasmic segment spans residues 267–277 (CPSKATFSRNI). Residues 278 to 298 (MNLIDIVAIIPYFITLGTELA) traverse the membrane as a helical segment. Residues 299-312 (ERQGNGQQAMSLAI) lie on the Extracellular side of the membrane. Residues 313-331 (LRVIRLVRVFRIFKLSRHS) traverse the membrane as a helical; Voltage-sensor segment. Topologically, residues 332 to 347 (KGLQILGQTLKASMRE) are cytoplasmic. Residues 348–367 (LGLLIFFLFIGVILFSSAVY) traverse the membrane as a helical segment. Over 368 to 408 (FAEADDPSSGFNSIPDAFWWAVVTMTTVGYGDMHPVTIGGK) the chain is Extracellular. The Selectivity filter signature appears at 394–399 (TVGYGD). The chain crosses the membrane as a helical span at residues 409-431 (IVGSLCAIAGVLTIALPVPVIVS). Topologically, residues 432 to 525 (NFNYFYHRET…VNIKKIFTDV (94 aa)) are cytoplasmic. An interaction with KCNE4 region spans residues 432-525 (NFNYFYHRET…VNIKKIFTDV (94 aa)). Tyr449 is modified (phosphotyrosine). Residue Ser470 is modified to Phosphoserine; by PKA. Residues 523 to 525 (TDV) carry the PDZ-binding motif.

The protein belongs to the potassium channel family. A (Shaker) (TC 1.A.1.2) subfamily. Kv1.3/KCNA3 sub-subfamily. In terms of assembly, homotetramer. Forms heterooligomers with KCNE4 which inhibits KCNA3 activity by impairing localization to the cell membrane. The stoichiometry of KCNA3 and KCNE4 in the heterooligomers are 4:1, 4:2, 4:3 or 4:4 respectively. Increasing the number of KCNE4 subunits steadily slows the activation KCNA3 and decreases its abundance at the cell membrane. However, a single subunit of KCNE4 is sufficient for the cooperative enhancement of the inactivating function of the channel. Interacts with SEC24D; this interaction is reduced in the presence of KCNE4. Interacts with DLG1, DLG2 and DLG4 via their PDZ domains. In terms of processing, phosphorylation on Tyr-449 inhibits its channel activity. N-glycosylation promotes the cell surface expression.

Its subcellular location is the cell membrane. It carries out the reaction K(+)(in) = K(+)(out). Activity is up-regulated by JAK2. Functionally, mediates the voltage-dependent potassium ion permeability of excitable membranes. Assuming opened or closed conformations in response to the voltage difference across the membrane, the protein forms a potassium-selective channel through which potassium ions may pass in accordance with their electrochemical gradient. The polypeptide is Potassium voltage-gated channel subfamily A member 3 (Kcna3) (Rattus norvegicus (Rat)).